The chain runs to 157 residues: NADPH-dependent 7-cyano-7-deazaguanine reductase (157 aa).

C55 (thioimide intermediate) is an active-site residue. D62 acts as the Proton donor in catalysis. Residues 77-79 (VES) and 96-97 (HE) contribute to the substrate site.

Belongs to the GTP cyclohydrolase I family. QueF type 1 subfamily.

The protein localises to the cytoplasm. It catalyses the reaction 7-aminomethyl-7-carbaguanine + 2 NADP(+) = 7-cyano-7-deazaguanine + 2 NADPH + 3 H(+). It participates in tRNA modification; tRNA-queuosine biosynthesis. Its function is as follows. Catalyzes the NADPH-dependent reduction of 7-cyano-7-deazaguanine (preQ0) to 7-aminomethyl-7-deazaguanine (preQ1). The chain is NADPH-dependent 7-cyano-7-deazaguanine reductase from Neisseria meningitidis serogroup A / serotype 4A (strain DSM 15465 / Z2491).